Consider the following 157-residue polypeptide: Crossover junction endodeoxyribonuclease RuvC (157 aa).

Catalysis depends on residues D7, E66, and D139. Mg(2+)-binding residues include D7, E66, and D139.

The protein belongs to the RuvC family. As to quaternary structure, homodimer which binds Holliday junction (HJ) DNA. The HJ becomes 2-fold symmetrical on binding to RuvC with unstacked arms; it has a different conformation from HJ DNA in complex with RuvA. In the full resolvosome a probable DNA-RuvA(4)-RuvB(12)-RuvC(2) complex forms which resolves the HJ. The cofactor is Mg(2+).

The protein localises to the cytoplasm. The catalysed reaction is Endonucleolytic cleavage at a junction such as a reciprocal single-stranded crossover between two homologous DNA duplexes (Holliday junction).. The RuvA-RuvB-RuvC complex processes Holliday junction (HJ) DNA during genetic recombination and DNA repair. Endonuclease that resolves HJ intermediates. Cleaves cruciform DNA by making single-stranded nicks across the HJ at symmetrical positions within the homologous arms, yielding a 5'-phosphate and a 3'-hydroxyl group; requires a central core of homology in the junction. The consensus cleavage sequence is 5'-(A/T)TT(C/G)-3'. Cleavage occurs on the 3'-side of the TT dinucleotide at the point of strand exchange. HJ branch migration catalyzed by RuvA-RuvB allows RuvC to scan DNA until it finds its consensus sequence, where it cleaves and resolves the cruciform DNA. This is Crossover junction endodeoxyribonuclease RuvC from Campylobacter concisus (strain 13826).